The primary structure comprises 87 residues: Precursor of CEP8 (87 aa).

The first 29 residues, 1 to 29 (MAKALFFNFCISLLIIAILVSHEIIPTEA), serve as a signal peptide directing secretion. A propeptide spanning residues 30-72 (RHLRTHRKSIKNSTLTVHEGAGGLRTGGGSVKTDISKEEHGVD) is cleaved from the precursor. N41 carries an N-linked (GlcNAc...) asparagine glycan. A disordered region spans residues 41–87 (NSTLTVHEGAGGLRTGGGSVKTDISKEEHGVDEFRPTTPGNSPGIGH). The span at 49–59 (GAGGLRTGGGS) shows a compositional bias: gly residues. Residues 63 to 75 (DISKEEHGVDEFR) are compositionally biased toward basic and acidic residues. Hydroxyproline occurs at positions 76, 79, and 83.

The protein belongs to the C-terminally encoded plant signaling peptide (CEP) family. As to quaternary structure, interacts with CEP receptors (e.g. CEPR1 and CEPR2). In terms of processing, the mature small signaling peptide is generated by proteolytic processing of the longer precursor. Expressed in lateral root primordia and in lateral roots excluding the meristem region. Also present in the aerial tissues, such as leaf petioles and the shoot apex region.

The protein resides in the secreted. The protein localises to the extracellular space. It is found in the apoplast. Functionally, extracellular signaling peptide that may regulate primary root growth rate and systemic nitrogen (N)-demand signaling. Mediates up-regulation of genes involved in N uptake and assimilation pathways. The sequence is that of Precursor of CEP8 from Arabidopsis thaliana (Mouse-ear cress).